The primary structure comprises 228 residues: Prolactin-2A1 (228 aa).

Residues 1 to 29 (MQLSITHPCCWTLRLLLVSNLLLWENVAL) form the signal peptide. 2 cysteine pairs are disulfide-bonded: C87–C203 and C220–C228.

Belongs to the somatotropin/prolactin family. Expressed specifically in the placenta. Highly expressed in invasive trophoblast cells lining the central placental vessel.

It is found in the secreted. The protein is Prolactin-2A1 (Prl2a1) of Rattus norvegicus (Rat).